The primary structure comprises 469 residues: Argininosuccinate lyase (469 aa).

It belongs to the lyase 1 family. Argininosuccinate lyase subfamily.

The protein resides in the cytoplasm. The enzyme catalyses 2-(N(omega)-L-arginino)succinate = fumarate + L-arginine. Its pathway is amino-acid biosynthesis; L-arginine biosynthesis; L-arginine from L-ornithine and carbamoyl phosphate: step 3/3. This chain is Argininosuccinate lyase, found in Burkholderia orbicola (strain MC0-3).